The primary structure comprises 351 residues: UDP-N-acetylglucosamine--N-acetylmuramyl-(pentapeptide) pyrophosphoryl-undecaprenol N-acetylglucosamine transferase (351 aa).

UDP-N-acetyl-alpha-D-glucosamine is bound by residues 12–14, Asn124, Arg160, Ser188, Ile239, 258–263, and Gln283; these read TGG and ALTVCE.

This sequence belongs to the glycosyltransferase 28 family. MurG subfamily.

The protein resides in the cell inner membrane. The enzyme catalyses di-trans,octa-cis-undecaprenyl diphospho-N-acetyl-alpha-D-muramoyl-L-alanyl-D-glutamyl-meso-2,6-diaminopimeloyl-D-alanyl-D-alanine + UDP-N-acetyl-alpha-D-glucosamine = di-trans,octa-cis-undecaprenyl diphospho-[N-acetyl-alpha-D-glucosaminyl-(1-&gt;4)]-N-acetyl-alpha-D-muramoyl-L-alanyl-D-glutamyl-meso-2,6-diaminopimeloyl-D-alanyl-D-alanine + UDP + H(+). The protein operates within cell wall biogenesis; peptidoglycan biosynthesis. In terms of biological role, cell wall formation. Catalyzes the transfer of a GlcNAc subunit on undecaprenyl-pyrophosphoryl-MurNAc-pentapeptide (lipid intermediate I) to form undecaprenyl-pyrophosphoryl-MurNAc-(pentapeptide)GlcNAc (lipid intermediate II). The sequence is that of UDP-N-acetylglucosamine--N-acetylmuramyl-(pentapeptide) pyrophosphoryl-undecaprenol N-acetylglucosamine transferase from Actinobacillus pleuropneumoniae serotype 7 (strain AP76).